The chain runs to 355 residues: Guanine nucleotide-binding protein G(i) subunit alpha-2 (355 aa).

Glycine 2 carries the N-myristoyl glycine lipid modification. Residue cysteine 3 is the site of S-palmitoyl cysteine attachment. One can recognise a G-alpha domain in the interval 32–355 (REVKLLLLGA…KNNLKDCGLF (324 aa)). Positions 35–48 (KLLLLGAGESGKST) are G1 motif. Residues 40 to 47 (GAGESGKS), 176 to 182 (LRTRVKT), 201 to 205 (DVGGQ), 270 to 273 (NKKD), and alanine 327 contribute to the GTP site. Mg(2+) is bound by residues serine 47 and threonine 182. Residues 174-182 (DVLRTRVKT) are G2 motif. A G3 motif region spans residues 197–206 (FKMFDVGGQR). A G4 motif region spans residues 266-273 (ILFLNKKD). A G5 motif region spans residues 325-330 (TCATDT).

It belongs to the G-alpha family. G(i/o/t/z) subfamily. In terms of assembly, g proteins are composed of 3 units; alpha, beta and gamma. The alpha chain contains the guanine nucleotide binding site. In this context, interacts with GNB2. Interacts with UNC5B. Interacts with GPSM1. Interacts with RGS12 and RGS14. Interacts (inactive GDP-bound form) with NUCB1 (via GBA motif); the interaction leads to activation of GNAI3. Interacts (inactive GDP-bound form) with CCDC88C/DAPLE (via GBA motif). Interacts (inactive GDP-bound form) with CCDC8A/GIV (via GBA motif). Ubiquitously expressed. Most abundant in the lung and in the spleen.

Its subcellular location is the cytoplasm. It is found in the cytoskeleton. It localises to the microtubule organizing center. The protein localises to the centrosome. The protein resides in the cell membrane. Its subcellular location is the membrane. Its function is as follows. Guanine nucleotide-binding proteins (G proteins) are involved as modulators or transducers in various transmembrane signaling systems. The G(i) proteins are involved in hormonal regulation of adenylate cyclase: they inhibit the cyclase in response to beta-adrenergic stimuli. May play a role in cell division. The polypeptide is Guanine nucleotide-binding protein G(i) subunit alpha-2 (GNAI2) (Cavia porcellus (Guinea pig)).